A 206-amino-acid chain; its full sequence is Pyridoxine/pyridoxamine 5'-phosphate oxidase (206 aa).

Residues 53–58, 68–69, K75, and Q97 each bind FMN; these read RMVLLK and YT. K58 is a substrate binding site. 3 residues coordinate substrate: Y115, R119, and S123. FMN is bound by residues 132-133 and W177; that span reads QS. 183-185 contacts substrate; sequence RLH. R187 contributes to the FMN binding site.

Belongs to the pyridoxamine 5'-phosphate oxidase family. In terms of assembly, homodimer. FMN is required as a cofactor.

The catalysed reaction is pyridoxamine 5'-phosphate + O2 + H2O = pyridoxal 5'-phosphate + H2O2 + NH4(+). The enzyme catalyses pyridoxine 5'-phosphate + O2 = pyridoxal 5'-phosphate + H2O2. It functions in the pathway cofactor metabolism; pyridoxal 5'-phosphate salvage; pyridoxal 5'-phosphate from pyridoxamine 5'-phosphate: step 1/1. It participates in cofactor metabolism; pyridoxal 5'-phosphate salvage; pyridoxal 5'-phosphate from pyridoxine 5'-phosphate: step 1/1. In terms of biological role, catalyzes the oxidation of either pyridoxine 5'-phosphate (PNP) or pyridoxamine 5'-phosphate (PMP) into pyridoxal 5'-phosphate (PLP). The protein is Pyridoxine/pyridoxamine 5'-phosphate oxidase of Allorhizobium ampelinum (strain ATCC BAA-846 / DSM 112012 / S4) (Agrobacterium vitis (strain S4)).